A 210-amino-acid chain; its full sequence is 7-carboxy-7-deazaguanine synthase (210 aa).

Residues 12 to 14 (LQG) and Arg27 each bind substrate. Residues 18–210 (HAGRASVFCR…VQTHKSLGIR (193 aa)) form the Radical SAM core domain. [4Fe-4S] cluster is bound by residues Cys31, Cys46, and Cys49. Residue Thr51 participates in Mg(2+) binding. Thr90 is a substrate binding site. Residues Gly92, 133 to 135 (SPK), and 173 to 176 (QPMD) contribute to the S-adenosyl-L-methionine site.

This sequence belongs to the radical SAM superfamily. 7-carboxy-7-deazaguanine synthase family. As to quaternary structure, homodimer. It depends on [4Fe-4S] cluster as a cofactor. Requires S-adenosyl-L-methionine as cofactor. Mg(2+) serves as cofactor.

It carries out the reaction 6-carboxy-5,6,7,8-tetrahydropterin + H(+) = 7-carboxy-7-deazaguanine + NH4(+). It participates in purine metabolism; 7-cyano-7-deazaguanine biosynthesis. Its function is as follows. Catalyzes the complex heterocyclic radical-mediated conversion of 6-carboxy-5,6,7,8-tetrahydropterin (CPH4) to 7-carboxy-7-deazaguanine (CDG), a step common to the biosynthetic pathways of all 7-deazapurine-containing compounds. The sequence is that of 7-carboxy-7-deazaguanine synthase from Bradyrhizobium diazoefficiens (strain JCM 10833 / BCRC 13528 / IAM 13628 / NBRC 14792 / USDA 110).